The chain runs to 109 residues: Iron-sulfur cluster assembly protein CyaY (109 aa).

It belongs to the frataxin family.

Its function is as follows. Involved in iron-sulfur (Fe-S) cluster assembly. May act as a regulator of Fe-S biogenesis. This Bordetella petrii (strain ATCC BAA-461 / DSM 12804 / CCUG 43448) protein is Iron-sulfur cluster assembly protein CyaY.